Reading from the N-terminus, the 868-residue chain is Monofunctional pimaradiene synthase (868 aa).

Residues D620, D624, N764, T768, and E772 each coordinate Mg(2+).

It belongs to the terpene synthase family. Tpsd subfamily. The cofactor is Mg(2+).

It catalyses the reaction (+)-copalyl diphosphate = (-)-pimara-8(14),15-diene + diphosphate. Its pathway is terpene metabolism; oleoresin biosynthesis. Its function is as follows. Involved in defensive oleoresin formation in conifers in response to insect attack or other injury. Involved in diterpene (C20) olefins biosynthesis. Monofunctional enzyme lacking the DXDD motif in the class II active site relevant for the cyclization of geranylgeranyl diphosphate (GGPP). Requires (+)-copalyl diphosphate ((+)-CPP) as substrate, but no activity with GGPP or ent-CPP. Pimaradiene is the major products of the enzyme. This chain is Monofunctional pimaradiene synthase, found in Pinus banksiana (Jack pine).